Here is a 298-residue protein sequence, read N- to C-terminus: ADP/ATP translocase 3 (298 aa).

Residue Met-1 is modified to N-acetylmethionine. Topologically, residues Met-1–Ser-7 are mitochondrial intermembrane. Thr-2 carries the N-acetylthreonine; in ADP/ATP translocase 3, N-terminally processed modification. Residues Ile-6–Ile-98 form a Solcar 1 repeat. A helical membrane pass occupies residues Phe-8 to Gln-37. At Val-38 to Asn-74 the chain is on the mitochondrial matrix side. Lys-52 carries the N6,N6,N6-trimethyllysine modification. The chain crosses the membrane as a helical span at residues Leu-75 to Phe-99. 2 residues coordinate ADP: Arg-80 and Lys-92. The Mitochondrial intermembrane portion of the chain corresponds to Leu-100–Phe-109. At Lys-105 the chain carries N6-acetyllysine. Residues Trp-110–Phe-130 form a helical membrane-spanning segment. 2 Solcar repeats span residues Arg-111 to Met-201 and Val-212 to Val-297. Residues Val-131–Ser-178 are Mitochondrial matrix-facing. Residues Val-179–Lys-199 traverse the membrane as a helical segment. The Mitochondrial intermembrane segment spans residues Gly-200–Ile-210. A helical membrane pass occupies residues Val-211–Phe-231. The Mitochondrial matrix segment spans residues Asp-232–Gly-273. ADP is bound at residue Arg-235. The segment at Arg-235–Met-240 is important for transport activity. The Nucleotide carrier signature motif signature appears at Arg-235–Met-240. Lys-268 carries the N6-acetyllysine modification. A helical transmembrane segment spans residues Ala-274 to Tyr-291. Residues Asp-292 to Ile-298 lie on the Mitochondrial intermembrane side of the membrane.

Belongs to the mitochondrial carrier (TC 2.A.29) family. In terms of assembly, monomer. Found in a complex with ARL2, ARL2BP and SLC25A6/ANT3. (Microbial infection) Interacts with influenza A virus PB1-F2 protein. As to quaternary structure, (Microbial infection) Interacts with HIV-1 Vpr. Post-translationally, trimethylated by ANTKMT at Lys-52. Expressed in erythrocytes (at protein level).

It is found in the mitochondrion inner membrane. Its subcellular location is the membrane. The catalysed reaction is ADP(in) + ATP(out) = ADP(out) + ATP(in). The enzyme catalyses H(+)(in) = H(+)(out). The matrix-open state (m-state) is inhibited by the membrane-permeable bongkrekic acid (BKA). The cytoplasmic-open state (c-state) is inhibited by the membrane-impermeable toxic inhibitor carboxyatractyloside (CATR). Proton transporter activity is inhibited by ADP:ATP antiporter activity. In terms of biological role, ADP:ATP antiporter that mediates import of ADP into the mitochondrial matrix for ATP synthesis, and export of ATP out to fuel the cell. Cycles between the cytoplasmic-open state (c-state) and the matrix-open state (m-state): operates by the alternating access mechanism with a single substrate-binding site intermittently exposed to either the cytosolic (c-state) or matrix (m-state) side of the inner mitochondrial membrane. In addition to its ADP:ATP antiporter activity, also involved in mitochondrial uncoupling and mitochondrial permeability transition pore (mPTP) activity. Plays a role in mitochondrial uncoupling by acting as a proton transporter: proton transport uncouples the proton flows via the electron transport chain and ATP synthase to reduce the efficiency of ATP production and cause mitochondrial thermogenesis. Proton transporter activity is inhibited by ADP:ATP antiporter activity, suggesting that SLC25A6/ANT3 acts as a master regulator of mitochondrial energy output by maintaining a delicate balance between ATP production (ADP:ATP antiporter activity) and thermogenesis (proton transporter activity). Proton transporter activity requires free fatty acids as cofactor, but does not transport it. Also plays a key role in mPTP opening, a non-specific pore that enables free passage of the mitochondrial membranes to solutes of up to 1.5 kDa, and which contributes to cell death. It is however unclear if SLC25A6/ANT3 constitutes a pore-forming component of mPTP or regulates it. The chain is ADP/ATP translocase 3 from Homo sapiens (Human).